The following is a 498-amino-acid chain: ATP synthase subunit beta, chloroplastic (498 aa).

172 to 179 (GGAGVGKT) serves as a coordination point for ATP.

The protein belongs to the ATPase alpha/beta chains family. As to quaternary structure, F-type ATPases have 2 components, CF(1) - the catalytic core - and CF(0) - the membrane proton channel. CF(1) has five subunits: alpha(3), beta(3), gamma(1), delta(1), epsilon(1). CF(0) has four main subunits: a(1), b(1), b'(1) and c(9-12).

The protein localises to the plastid. It localises to the chloroplast thylakoid membrane. The catalysed reaction is ATP + H2O + 4 H(+)(in) = ADP + phosphate + 5 H(+)(out). In terms of biological role, produces ATP from ADP in the presence of a proton gradient across the membrane. The catalytic sites are hosted primarily by the beta subunits. The protein is ATP synthase subunit beta, chloroplastic of Saruma henryi (Upright wild ginger).